The following is an 88-amino-acid chain: Small ribosomal subunit protein bS20 (88 aa).

The segment covering 1-23 (MPNTKSAEKALRVADANRQENRR) has biased composition (basic and acidic residues). The segment at 1 to 29 (MPNTKSAEKALRVADANRQENRRAKSQVK) is disordered.

This sequence belongs to the bacterial ribosomal protein bS20 family.

In terms of biological role, binds directly to 16S ribosomal RNA. This is Small ribosomal subunit protein bS20 from Dehalococcoides mccartyi (strain ATCC BAA-2100 / JCM 16839 / KCTC 5957 / BAV1).